The following is a 355-amino-acid chain: UDP-N-acetylglucosamine--N-acetylmuramyl-(pentapeptide) pyrophosphoryl-undecaprenol N-acetylglucosamine transferase (355 aa).

UDP-N-acetyl-alpha-D-glucosamine is bound by residues 15–17 (TGG), N127, R163, S191, I244, 263–268 (ALTVSE), and Q288.

This sequence belongs to the glycosyltransferase 28 family. MurG subfamily.

It is found in the cell inner membrane. The catalysed reaction is di-trans,octa-cis-undecaprenyl diphospho-N-acetyl-alpha-D-muramoyl-L-alanyl-D-glutamyl-meso-2,6-diaminopimeloyl-D-alanyl-D-alanine + UDP-N-acetyl-alpha-D-glucosamine = di-trans,octa-cis-undecaprenyl diphospho-[N-acetyl-alpha-D-glucosaminyl-(1-&gt;4)]-N-acetyl-alpha-D-muramoyl-L-alanyl-D-glutamyl-meso-2,6-diaminopimeloyl-D-alanyl-D-alanine + UDP + H(+). Its pathway is cell wall biogenesis; peptidoglycan biosynthesis. Its function is as follows. Cell wall formation. Catalyzes the transfer of a GlcNAc subunit on undecaprenyl-pyrophosphoryl-MurNAc-pentapeptide (lipid intermediate I) to form undecaprenyl-pyrophosphoryl-MurNAc-(pentapeptide)GlcNAc (lipid intermediate II). The sequence is that of UDP-N-acetylglucosamine--N-acetylmuramyl-(pentapeptide) pyrophosphoryl-undecaprenol N-acetylglucosamine transferase from Salmonella newport (strain SL254).